A 179-amino-acid polypeptide reads, in one-letter code: ATP synthase subunit delta (179 aa).

Belongs to the ATPase delta chain family. As to quaternary structure, F-type ATPases have 2 components, F(1) - the catalytic core - and F(0) - the membrane proton channel. F(1) has five subunits: alpha(3), beta(3), gamma(1), delta(1), epsilon(1). F(0) has three main subunits: a(1), b(2) and c(10-14). The alpha and beta chains form an alternating ring which encloses part of the gamma chain. F(1) is attached to F(0) by a central stalk formed by the gamma and epsilon chains, while a peripheral stalk is formed by the delta and b chains.

It localises to the cell inner membrane. In terms of biological role, f(1)F(0) ATP synthase produces ATP from ADP in the presence of a proton or sodium gradient. F-type ATPases consist of two structural domains, F(1) containing the extramembraneous catalytic core and F(0) containing the membrane proton channel, linked together by a central stalk and a peripheral stalk. During catalysis, ATP synthesis in the catalytic domain of F(1) is coupled via a rotary mechanism of the central stalk subunits to proton translocation. Functionally, this protein is part of the stalk that links CF(0) to CF(1). It either transmits conformational changes from CF(0) to CF(1) or is implicated in proton conduction. The chain is ATP synthase subunit delta from Burkholderia thailandensis (strain ATCC 700388 / DSM 13276 / CCUG 48851 / CIP 106301 / E264).